The following is a 1324-amino-acid chain: Probable phosphoribosylformylglycinamidine synthase (1324 aa).

ATP contacts are provided by residues 314 to 325, 394 to 396, and Ala-681; these read GATTGTGGRIRD and SGF. Mg(2+) is bound by residues Asp-682, Glu-721, Asn-725, and Asp-894. Ser-896 serves as a coordination point for ATP. Residues 1053-1295 form the Glutamine amidotransferase type-1 domain; it reads RVAIIREEGS…LTWQWAESSE (243 aa). Catalysis depends on Cys-1146, which acts as the Nucleophile. Active-site residues include His-1280 and Asp-1282.

This sequence in the N-terminal section; belongs to the FGAMS family.

It is found in the cytoplasm. It carries out the reaction N(2)-formyl-N(1)-(5-phospho-beta-D-ribosyl)glycinamide + L-glutamine + ATP + H2O = 2-formamido-N(1)-(5-O-phospho-beta-D-ribosyl)acetamidine + L-glutamate + ADP + phosphate + H(+). It functions in the pathway purine metabolism; IMP biosynthesis via de novo pathway; 5-amino-1-(5-phospho-D-ribosyl)imidazole from N(2)-formyl-N(1)-(5-phospho-D-ribosyl)glycinamide: step 1/2. Its function is as follows. Phosphoribosylformylglycinamidine synthase involved in the purines biosynthetic pathway. Catalyzes the ATP-dependent conversion of formylglycinamide ribonucleotide (FGAR) and glutamine to yield formylglycinamidine ribonucleotide (FGAM) and glutamate. This Caenorhabditis elegans protein is Probable phosphoribosylformylglycinamidine synthase.